Consider the following 222-residue polypeptide: 23kDa protein (222 aa).

The segment covering 1 to 12 (MEPHDQSGSTTR) has biased composition (polar residues). The segment at 1-21 (MEPHDQSGSTTRQLDEIRDRR) is disordered.

Functionally, may act as a regulatory factor during viral transcription. This is 23kDa protein from Indian citrus ringspot virus (isolate Kinnow mandarin/India/K1/1996) (ICRSV).